A 159-amino-acid chain; its full sequence is uncharacterized protein (159 aa).

2 disordered regions span residues 1–29 (MHQT…TSES) and 114–159 (TRGG…NENT). Polar residues predominate over residues 15 to 29 (SFSNESPTSRETSES).

This is an uncharacterized protein from Homo sapiens (Human).